The sequence spans 181 residues: Large ribosomal subunit protein uL5 (181 aa).

It belongs to the universal ribosomal protein uL5 family. In terms of assembly, part of the 50S ribosomal subunit; part of the 5S rRNA/L5/L18/L25 subcomplex. Contacts the 5S rRNA and the P site tRNA. Forms a bridge to the 30S subunit in the 70S ribosome.

Its function is as follows. This is one of the proteins that bind and probably mediate the attachment of the 5S RNA into the large ribosomal subunit, where it forms part of the central protuberance. In the 70S ribosome it contacts protein S13 of the 30S subunit (bridge B1b), connecting the 2 subunits; this bridge is implicated in subunit movement. Contacts the P site tRNA; the 5S rRNA and some of its associated proteins might help stabilize positioning of ribosome-bound tRNAs. The chain is Large ribosomal subunit protein uL5 from Thermosipho africanus (strain TCF52B).